The following is a 76-amino-acid chain: Large ribosomal subunit protein bL31 (76 aa).

The protein belongs to the bacterial ribosomal protein bL31 family. Type A subfamily. As to quaternary structure, part of the 50S ribosomal subunit.

In terms of biological role, binds the 23S rRNA. This Picosynechococcus sp. (strain ATCC 27264 / PCC 7002 / PR-6) (Agmenellum quadruplicatum) protein is Large ribosomal subunit protein bL31.